Consider the following 691-residue polypeptide: DNA ligase (691 aa).

Residues 41-45 (DAEYD), 90-91 (SL), and E130 contribute to the NAD(+) site. K132 serves as the catalytic N6-AMP-lysine intermediate. NAD(+) contacts are provided by R153, E190, K307, and K331. The Zn(2+) site is built by C425, C428, C443, and C449. Positions 610–691 (APQGVLAGKT…MHTLLEGHAR (82 aa)) constitute a BRCT domain.

Belongs to the NAD-dependent DNA ligase family. LigA subfamily. Requires Mg(2+) as cofactor. It depends on Mn(2+) as a cofactor.

The enzyme catalyses NAD(+) + (deoxyribonucleotide)n-3'-hydroxyl + 5'-phospho-(deoxyribonucleotide)m = (deoxyribonucleotide)n+m + AMP + beta-nicotinamide D-nucleotide.. Functionally, DNA ligase that catalyzes the formation of phosphodiester linkages between 5'-phosphoryl and 3'-hydroxyl groups in double-stranded DNA using NAD as a coenzyme and as the energy source for the reaction. It is essential for DNA replication and repair of damaged DNA. This is DNA ligase from Burkholderia mallei (strain NCTC 10247).